Consider the following 268-residue polypeptide: WUSCHEL-related homeobox 12 (268 aa).

The span at 1 to 16 (MNQEGASHSPSSTSTE) shows a compositional bias: polar residues. Disordered stretches follow at residues 1–22 (MNQEGASHSPSSTSTEPVRARW) and 173–198 (SDHNHQQQHHSSNAASVLNPSDQNSN). The segment at residues 17 to 81 (PVRARWSPKP…NRRSRSRRRH (65 aa)) is a DNA-binding region (homeobox; WUS-type).

The protein belongs to the WUS homeobox family.

The protein resides in the nucleus. In terms of biological role, transcription factor which may be involved in developmental processes. This chain is WUSCHEL-related homeobox 12 (WOX12), found in Arabidopsis thaliana (Mouse-ear cress).